A 66-amino-acid chain; its full sequence is Large ribosomal subunit protein uL29 (66 aa).

This sequence belongs to the universal ribosomal protein uL29 family.

The protein is Large ribosomal subunit protein uL29 of Rhizobium rhizogenes (strain K84 / ATCC BAA-868) (Agrobacterium radiobacter).